A 654-amino-acid chain; its full sequence is Polyvinylalcohol dehydrogenase (654 aa).

The N-terminal stretch at 1 to 32 is a signal peptide; sequence MGSHAWGGAVFSAATLIAFGSVVHASGTVAET. The Cytochrome c domain maps to 42 to 159; it reads ADQLDGETLY…AANQWNGWST (118 aa). Heme c-binding residues include Cys-55, Cys-58, and His-59.

It belongs to the bacterial PQQ dehydrogenase family. In terms of assembly, monomer. Pyrroloquinoline quinone serves as cofactor.

It is found in the periplasm. It carries out the reaction a polyvinyl alcohol + 2n Fe(III)-[cytochrome c] = an oxidized polyvinyl alcohol + 2n Fe(II)-[cytochrome c] + 2n H(+). In terms of biological role, catalyzes the oxidation of polyvinyl alcohol (PVA) in the polyvinyl alcohol degradation pathway. This is Polyvinylalcohol dehydrogenase (pvadh) from Sphingopyxis sp. (strain 113P3).